The chain runs to 288 residues: MKLKFTKMHGAGNDFVVLDGIHQQIDLTPAQWRALASRHFGVGADQILIVEKPTRPDVDFRYRIVNADGSEVEHCGNGARCFVRFVTEQGMTDKRSVRVEVMNGVITLTLQDDGQVTVDMGAPELEPARVPFRAQGLPTHAEGADALYGLEVNGRTEWISAVSMGNPHAVQVVDDVENFPVLQDGPVIEHHPAFPNRVNAGFMQVVDRHAIRLRVYERGAGETLACGTGACAAVVAGIRRGLLDSPVRVHTHGGELTIAWDGGAEPVRMTGPATTVFEGSIDLAALPA.

Substrate contacts are provided by asparagine 13, glutamine 46, and asparagine 66. The active-site Proton donor is cysteine 75. Residues 76–77 (GN), asparagine 166, asparagine 199, and 217–218 (ER) contribute to the substrate site. Cysteine 226 (proton acceptor) is an active-site residue. Substrate is bound at residue 227 to 228 (GT).

It belongs to the diaminopimelate epimerase family. In terms of assembly, homodimer.

It is found in the cytoplasm. The catalysed reaction is (2S,6S)-2,6-diaminopimelate = meso-2,6-diaminopimelate. It participates in amino-acid biosynthesis; L-lysine biosynthesis via DAP pathway; DL-2,6-diaminopimelate from LL-2,6-diaminopimelate: step 1/1. Its function is as follows. Catalyzes the stereoinversion of LL-2,6-diaminopimelate (L,L-DAP) to meso-diaminopimelate (meso-DAP), a precursor of L-lysine and an essential component of the bacterial peptidoglycan. This chain is Diaminopimelate epimerase, found in Cupriavidus taiwanensis (strain DSM 17343 / BCRC 17206 / CCUG 44338 / CIP 107171 / LMG 19424 / R1) (Ralstonia taiwanensis (strain LMG 19424)).